The primary structure comprises 198 residues: Peptidyl-tRNA hydrolase (198 aa).

Tyr-15 contacts tRNA. His-20 (proton acceptor) is an active-site residue. Positions 65, 67, and 113 each coordinate tRNA.

The protein belongs to the PTH family. Monomer.

It is found in the cytoplasm. It catalyses the reaction an N-acyl-L-alpha-aminoacyl-tRNA + H2O = an N-acyl-L-amino acid + a tRNA + H(+). Functionally, hydrolyzes ribosome-free peptidyl-tRNAs (with 1 or more amino acids incorporated), which drop off the ribosome during protein synthesis, or as a result of ribosome stalling. Catalyzes the release of premature peptidyl moieties from peptidyl-tRNA molecules trapped in stalled 50S ribosomal subunits, and thus maintains levels of free tRNAs and 50S ribosomes. The polypeptide is Peptidyl-tRNA hydrolase (Ehrlichia chaffeensis (strain ATCC CRL-10679 / Arkansas)).